The following is a 511-amino-acid chain: Cytochrome P450 76C4 (511 aa).

A helical transmembrane segment spans residues 3–23 (IISGQALFLLFCFISSCFLIS). Cys-450 provides a ligand contact to heme.

The protein belongs to the cytochrome P450 family. Requires heme as cofactor.

The protein localises to the membrane. The polypeptide is Cytochrome P450 76C4 (CYP76C4) (Arabidopsis thaliana (Mouse-ear cress)).